The following is a 452-amino-acid chain: UDP-N-acetylmuramoylalanine--D-glutamate ligase (452 aa).

119-125 (GSNGKTT) contributes to the ATP binding site.

This sequence belongs to the MurCDEF family.

It is found in the cytoplasm. The enzyme catalyses UDP-N-acetyl-alpha-D-muramoyl-L-alanine + D-glutamate + ATP = UDP-N-acetyl-alpha-D-muramoyl-L-alanyl-D-glutamate + ADP + phosphate + H(+). It functions in the pathway cell wall biogenesis; peptidoglycan biosynthesis. Its function is as follows. Cell wall formation. Catalyzes the addition of glutamate to the nucleotide precursor UDP-N-acetylmuramoyl-L-alanine (UMA). This Streptococcus pyogenes serotype M2 (strain MGAS10270) protein is UDP-N-acetylmuramoylalanine--D-glutamate ligase.